We begin with the raw amino-acid sequence, 288 residues long: uncharacterized protein (288 aa).

Helical transmembrane passes span 43–63, 190–210, 243–263, and 265–285; these read LFTL…NYII, LFIF…FLLE, GIPI…SILI, and LLQM…NKSL.

It is found in the cell membrane. This is an uncharacterized protein from Rickettsia prowazekii (strain Madrid E).